A 152-amino-acid chain; its full sequence is Transcriptional regulator MraZ (152 aa).

SpoVT-AbrB domains follow at residues 7–54 and 83–126; these read INSI…TMDE and ASEM…SQEA.

It belongs to the MraZ family. Forms oligomers.

The protein resides in the cytoplasm. Its subcellular location is the nucleoid. This chain is Transcriptional regulator MraZ, found in Hydrogenovibrio crunogenus (strain DSM 25203 / XCL-2) (Thiomicrospira crunogena).